We begin with the raw amino-acid sequence, 335 residues long: tRNA pseudouridine synthase D (335 aa).

Aspartate 77 (nucleophile) is an active-site residue. A TRUD domain is found at 152-308; it reads GFPNYFTEQR…AQNLNWQFEP (157 aa).

This sequence belongs to the pseudouridine synthase TruD family.

The catalysed reaction is uridine(13) in tRNA = pseudouridine(13) in tRNA. Responsible for synthesis of pseudouridine from uracil-13 in transfer RNAs. This is tRNA pseudouridine synthase D from Actinobacillus succinogenes (strain ATCC 55618 / DSM 22257 / CCUG 43843 / 130Z).